A 61-amino-acid chain; its full sequence is Large ribosomal subunit protein bL28A (61 aa).

Belongs to the bacterial ribosomal protein bL28 family.

The protein is Large ribosomal subunit protein bL28A (rpmB1) of Streptomyces coelicolor (strain ATCC BAA-471 / A3(2) / M145).